Here is an 832-residue protein sequence, read N- to C-terminus: Ventricular zone-expressed PH domain-containing protein homolog 1 (832 aa).

Residues 201-319 are interaction with TGFBR1; that stretch reads AELLALMSQL…RYLVSQLANM (119 aa). Positions 497–519 are disordered; the sequence is DTHGSQLRNSSASHPSIIHSEPE. Residues 499 to 510 show a composition bias toward polar residues; it reads HGSQLRNSSASH. The interaction with TGFBR1 stretch occupies residues 663–832; sequence ESTFPQQKDL…RESREVTTYL (170 aa). Residues 716–818 enclose the PH domain; that stretch reads QPLIEGKLKE…WLQCINVALA (103 aa).

This sequence belongs to the MELT/VEPH family. As to quaternary structure, interacts with TGFBR1.

It is found in the cell membrane. Interacts with TGF-beta receptor type-1 (TGFBR1) and inhibits dissociation of activated SMAD2 from TGFBR1, impeding its nuclear accumulation and resulting in impaired TGF-beta signaling. May also affect FOXO, Hippo and Wnt signaling. In Rattus norvegicus (Rat), this protein is Ventricular zone-expressed PH domain-containing protein homolog 1 (Veph1).